Consider the following 128-residue polypeptide: Large ribosomal subunit protein bL17 (128 aa).

The protein belongs to the bacterial ribosomal protein bL17 family. In terms of assembly, part of the 50S ribosomal subunit. Contacts protein L32.

This Petrotoga mobilis (strain DSM 10674 / SJ95) protein is Large ribosomal subunit protein bL17.